The sequence spans 507 residues: Bifunctional purine biosynthesis protein PurH (507 aa).

The MGS-like domain maps to 1–149 (MSESKRIKTA…KNYNDVIIVA (149 aa)).

This sequence belongs to the PurH family.

The enzyme catalyses (6R)-10-formyltetrahydrofolate + 5-amino-1-(5-phospho-beta-D-ribosyl)imidazole-4-carboxamide = 5-formamido-1-(5-phospho-D-ribosyl)imidazole-4-carboxamide + (6S)-5,6,7,8-tetrahydrofolate. The catalysed reaction is IMP + H2O = 5-formamido-1-(5-phospho-D-ribosyl)imidazole-4-carboxamide. Its pathway is purine metabolism; IMP biosynthesis via de novo pathway; 5-formamido-1-(5-phospho-D-ribosyl)imidazole-4-carboxamide from 5-amino-1-(5-phospho-D-ribosyl)imidazole-4-carboxamide (10-formyl THF route): step 1/1. It functions in the pathway purine metabolism; IMP biosynthesis via de novo pathway; IMP from 5-formamido-1-(5-phospho-D-ribosyl)imidazole-4-carboxamide: step 1/1. This chain is Bifunctional purine biosynthesis protein PurH, found in Bacteroides thetaiotaomicron (strain ATCC 29148 / DSM 2079 / JCM 5827 / CCUG 10774 / NCTC 10582 / VPI-5482 / E50).